The primary structure comprises 143 residues: UPF0201 protein Pcal_0593 (143 aa).

This sequence belongs to the UPF0201 family.

The sequence is that of UPF0201 protein Pcal_0593 from Pyrobaculum calidifontis (strain DSM 21063 / JCM 11548 / VA1).